We begin with the raw amino-acid sequence, 328 residues long: Zinc finger Ran-binding domain-containing protein 2 (328 aa).

Serine 9 bears the Phosphoserine mark. The RanBP2-type 1 zinc-finger motif lies at 9-40 (SDGDWICPDKKCGNVNFARRTSCNRCGREKTT). Residues lysine 18, lysine 54, and lysine 92 each carry the N6-acetyllysine modification. The RanBP2-type 2 zinc-finger motif lies at 65 to 94 (SANDWQCKTCSNVNWARRSECNMCNTPKYA). A disordered region spans residues 117–328 (REESDGEYDE…SGSRSSSKKK (212 aa)). Serine 120, serine 153, serine 181, serine 188, and serine 193 each carry phosphoserine. The segment covering 150-163 (DKESEGEEEDEDED) has biased composition (acidic residues). The interval 151 to 328 (KESEGEEEDE…SGSRSSSKKK (178 aa)) is required for nuclear targeting. Over residues 196 to 210 (KKSNRRSRSKSRSSH) the composition is skewed to basic residues. Low complexity-rich tracts occupy residues 211–224 (SRSSSRSSSPSSSR) and 232–242 (RSSSSSQSRSR). Basic residues-rich tracts occupy residues 251–271 (SRGSKSSSRSHRGSSSPRKRS) and 297–312 (KKRRTRSRSPERHHRS). A compositionally biased stretch (low complexity) spans 313–328 (SSGSSHSGSRSSSKKK).

It belongs to the ZRANB2 family. Interacts with the C-terminal half of SNRNP70, the Arg/Ser-rich domain of AKAP17A as well as with U2AF1 and CLK1.

It localises to the nucleus. Its function is as follows. Splice factor required for alternative splicing of TRA2B/SFRS10 transcripts. Binds to ssRNA containing the consensus sequence 5'-AGGUAA-3'. May interfere with constitutive 5'-splice site selection. The protein is Zinc finger Ran-binding domain-containing protein 2 (ZRANB2) of Sus scrofa (Pig).